The chain runs to 234 residues: tRNA1(Val) (adenine(37)-N6)-methyltransferase (234 aa).

Belongs to the methyltransferase superfamily. tRNA (adenine-N(6)-)-methyltransferase family.

It localises to the cytoplasm. It carries out the reaction adenosine(37) in tRNA1(Val) + S-adenosyl-L-methionine = N(6)-methyladenosine(37) in tRNA1(Val) + S-adenosyl-L-homocysteine + H(+). Its function is as follows. Specifically methylates the adenine in position 37 of tRNA(1)(Val) (anticodon cmo5UAC). The sequence is that of tRNA1(Val) (adenine(37)-N6)-methyltransferase from Pedobacter heparinus (strain ATCC 13125 / DSM 2366 / CIP 104194 / JCM 7457 / NBRC 12017 / NCIMB 9290 / NRRL B-14731 / HIM 762-3).